The following is a 64-amino-acid chain: MLPLDSMERRHLKCPLCSGEKFRAEEGKLDSKWGFTAHKVRIAICENCGYVMMFYKGRTIWDFD.

This sequence to P.abyssi PAB3148.

This is an uncharacterized protein from Archaeoglobus fulgidus (strain ATCC 49558 / DSM 4304 / JCM 9628 / NBRC 100126 / VC-16).